We begin with the raw amino-acid sequence, 916 residues long: Probable dipeptidyl-aminopeptidase B (916 aa).

Disordered stretches follow at residues 1–35 (MGRT…SGLS) and 67–86 (DAEA…KLGS). The Cytoplasmic portion of the chain corresponds to 1 to 92 (MGRTGDLENA…KLGSGSRTRQ (92 aa)). Residues 21–35 (TSGTSSRSSTDSGLS) are compositionally biased toward low complexity. The helical; Signal-anchor for type II membrane protein transmembrane segment at 93–113 (IFWALVILCLGGWVLALVLFL) threads the bilayer. Residues 114-916 (THGRASSQTA…VKRSVPAFAH (803 aa)) lie on the Vacuolar side of the membrane. N-linked (GlcNAc...) asparagine glycosylation is found at Asn-349 and Asn-640. The Charge relay system role is filled by Ser-754. Asn-808 and Asn-813 each carry an N-linked (GlcNAc...) asparagine glycan. Catalysis depends on charge relay system residues Asp-831 and His-864.

This sequence belongs to the peptidase S9B family.

It localises to the vacuole membrane. It carries out the reaction Release of an N-terminal dipeptide, Xaa-Yaa-|-Zaa-, from a polypeptide, preferentially when Yaa is Pro, provided Zaa is neither Pro nor hydroxyproline.. Functionally, type IV dipeptidyl-peptidase which removes N-terminal dipeptides sequentially from polypeptides having unsubstituted N-termini provided that the penultimate residue is proline. The polypeptide is Probable dipeptidyl-aminopeptidase B (dapB) (Aspergillus flavus (strain ATCC 200026 / FGSC A1120 / IAM 13836 / NRRL 3357 / JCM 12722 / SRRC 167)).